Here is a 398-residue protein sequence, read N- to C-terminus: MAKLTVKDLDLKGKKVLVRVDFNVPLKNGVITNDNRISAALPTIKYIIEHGGRAILFSHLGRVKEEADKEGKSLAPVAKNLAEKLGQEVIFPGSTRGAELEAAIDALEDGQVLLVENTRFEDIDGKKESKNDPELGKYWASLGEGIFVNDAFGTAHRAHASNVGISANVEKAVAGFLLENEIAYIKEAVETPERPFVAILGGSKVSDKIGVIENLLEKADKVLIGGGMTYTFYKAQGIEIGNSLCEEDKLDVAKSLLEKSNGKLVLPVDSKEANAFADYTEVKVTEGEAVDTGFLGLDIGPKSIAKFDEALTGAKTVVWNGPMGVFENPDFQEGTIGVMDAIVKQPGVKSIIGGGDSAAAAINLGRADKFSWISTGGGASMELLEGKELPGLAALTEK.

Substrate is bound by residues 21–23 (DFN), Arg36, 59–62 (HLGR), Arg119, and Arg157. ATP is bound by residues Lys208, Gly296, Glu327, and 354-357 (GGDS).

It belongs to the phosphoglycerate kinase family. In terms of assembly, monomer.

The protein resides in the cytoplasm. It carries out the reaction (2R)-3-phosphoglycerate + ATP = (2R)-3-phospho-glyceroyl phosphate + ADP. The protein operates within carbohydrate degradation; glycolysis; pyruvate from D-glyceraldehyde 3-phosphate: step 2/5. This chain is Phosphoglycerate kinase, found in Streptococcus equi subsp. equi (strain 4047).